The following is a 282-amino-acid chain: Undecaprenyl-diphosphatase (282 aa).

6 helical membrane-spanning segments follow: residues 90-110 (YRLG…GLLF), 121-141 (LWVV…AEYL), 165-185 (LALV…LFLG), 194-214 (FGFL…LPDA), 228-248 (QLLV…SWFL), and 256-276 (MYWF…LLAT).

This sequence belongs to the UppP family.

Its subcellular location is the cell membrane. It catalyses the reaction di-trans,octa-cis-undecaprenyl diphosphate + H2O = di-trans,octa-cis-undecaprenyl phosphate + phosphate + H(+). Functionally, catalyzes the dephosphorylation of undecaprenyl diphosphate (UPP). Confers resistance to bacitracin. This is Undecaprenyl-diphosphatase from Mycobacterium marinum (strain ATCC BAA-535 / M).